Consider the following 506-residue polypeptide: MPNEIFTINLNAQAIIPEAFILLGIVGTLLVDLAGEKTASKWAPIICYLSIGSSLLSLALQWSNPVESAFLGSFNSDNLAISFRAIISLSTLVSLLISWRYTEQSGSPIGEFAAIVLSATLGAMLLCGSTDLISVFISLETLSVASYLLSGYLKRDPRSSEAALKYLLVGSAAAAVYLYGSSFLYGLSGSTNLATIGLEIINKPSFITSLALVFVLSTVAFKIAAVPFHQWTPDVYEGSPTPVVAFLSVGSKTAGFAFAIRILSTTFSSFDEEWKLLFTILAILSMALGNVVALAQTSMKRMLAYSSIGQAGFVMIGIVSGTQDGLSAAVLYLAAYLFMNLGAFSCVILFSLRTGSDRILDYSGLYQKDPLITLGLSLCLLSLGGLPPMLGFFGKIYLFFAGWANHQYLLVIVGLVTSVISIYYYISVIKMMVVKEPQEASEIVKSYPEINWGIVGLPPLRVALYTCVAVTALGGILSNPLFKLANTAVSETPFLQDIIATANNIS.

Transmembrane regions (helical) follow at residues 14 to 34, 42 to 62, 79 to 99, 108 to 128, 132 to 152, 167 to 187, 206 to 226, 240 to 260, 276 to 296, 302 to 322, 330 to 350, 374 to 394, and 409 to 429; these read AIIP…VDLA, WAPI…ALQW, LAIS…LISW, PIGE…LLCG, LISV…LSGY, LLVG…LYGL, FITS…IAAV, PTPV…AFAI, LLFT…ALAQ, MLAY…VSGT, VLYL…VILF, LGLS…GFFG, and LLVI…ISVI.

The protein belongs to the complex I subunit 2 family. NDH-1 can be composed of about 15 different subunits; different subcomplexes with different compositions have been identified which probably have different functions.

It is found in the cellular thylakoid membrane. It catalyses the reaction a plastoquinone + NADH + (n+1) H(+)(in) = a plastoquinol + NAD(+) + n H(+)(out). It carries out the reaction a plastoquinone + NADPH + (n+1) H(+)(in) = a plastoquinol + NADP(+) + n H(+)(out). Functionally, NDH-1 shuttles electrons from an unknown electron donor, via FMN and iron-sulfur (Fe-S) centers, to quinones in the respiratory and/or the photosynthetic chain. The immediate electron acceptor for the enzyme in this species is believed to be plastoquinone. Couples the redox reaction to proton translocation, and thus conserves the redox energy in a proton gradient. Cyanobacterial NDH-1 also plays a role in inorganic carbon-concentration. The protein is NAD(P)H-quinone oxidoreductase subunit 2 of Prochlorococcus marinus (strain MIT 9215).